A 162-amino-acid chain; its full sequence is Putative ankyrin repeat protein RBE_0151 (162 aa).

3 ANK repeats span residues 49–77, 81–110, and 114–145; these read EKWT…NINI, KGRT…VVAP, and YGWS…EHDK.

This is Putative ankyrin repeat protein RBE_0151 from Rickettsia bellii (strain RML369-C).